The following is a 495-amino-acid chain: EF-hand calcium-binding domain-containing protein 14 (495 aa).

Disordered stretches follow at residues 1-50 (MKKR…EEEE) and 381-404 (TNKP…FTSK). Ser-17 carries the phosphoserine modification. Basic residues predominate over residues 18–31 (RRKKPKKGPSSHRL). Acidic residues predominate over residues 37–50 (PDSDSESSSEEEEE). 2 consecutive EF-hand domains span residues 434 to 463 (SSTE…WTSL) and 464 to 495 (GSAM…ALGI). Ca(2+)-binding residues include Asp-477, Asp-479, Asp-481, Arg-483, and Glu-488.

The chain is EF-hand calcium-binding domain-containing protein 14 (EFCAB14) from Homo sapiens (Human).